The sequence spans 480 residues: Trigger factor (480 aa).

The region spanning 169–264 (GDIAVVDFKG…LKELKEKELP (96 aa)) is the PPIase FKBP-type domain. Residues 441 to 480 (PEGSLSPAEETEAAESDADADVSQTEQENSEPSTTEVTEG) form a disordered region. A compositionally biased stretch (acidic residues) spans 449–460 (EETEAAESDADA). The span at 462–480 (VSQTEQENSEPSTTEVTEG) shows a compositional bias: polar residues.

It belongs to the FKBP-type PPIase family. Tig subfamily.

Its subcellular location is the cytoplasm. The enzyme catalyses [protein]-peptidylproline (omega=180) = [protein]-peptidylproline (omega=0). Involved in protein export. Acts as a chaperone by maintaining the newly synthesized protein in an open conformation. Functions as a peptidyl-prolyl cis-trans isomerase. This chain is Trigger factor, found in Nostoc punctiforme (strain ATCC 29133 / PCC 73102).